Here is a 387-residue protein sequence, read N- to C-terminus: Putative protein FAM157C (387 aa).

Disordered regions lie at residues methionine 1–lysine 21, threonine 182–proline 226, and arginine 329–glycine 353.

This sequence belongs to the FAM157 family.

This is Putative protein FAM157C (FAM157C) from Homo sapiens (Human).